The chain runs to 364 residues: MKFIDEARIEVIAGDGGNGSASMRREKFVPFGGPDGGDGGRGGSVWAVADRNINTLIDYRFAKKHLARNGENGRGADCYGAAGDDITLRMPVGTAIYDADTEELIADLTIDGQRLCLAQGGEGGWGNIHFKSSTNRAPRQKTDGKAGERRNLRLELKVLADVGLLGMPNAGKSTLITAISNARPKIADYPFTTLHPNLGVVRTGPSKSFVVADIPGLIEGAAEGAGLGHQFLRHLQRTRVLLHVVDLAPFDESVDPVAEAKAIVGELKKYDAELFDKPRWLVLNKLDMVPEDEREARVKDFVKRFKWKGPVHRISALTHDGTQALVHAIQEYLDELRAEEDAAAAAPDQRLDPTLHNVDHDDQA.

Positions 1 to 159 (MKFIDEARIE…RNLRLELKVL (159 aa)) constitute an Obg domain. The disordered stretch occupies residues 128–147 (IHFKSSTNRAPRQKTDGKAG). In terms of domain architecture, OBG-type G spans 160 to 334 (ADVGLLGMPN…LVHAIQEYLD (175 aa)). GTP is bound by residues 166 to 173 (GMPNAGKS), 191 to 195 (FTTLH), 213 to 216 (DIPG), 284 to 287 (NKLD), and 315 to 317 (SAL). Residues Ser-173 and Thr-193 each coordinate Mg(2+). The interval 340–364 (EDAAAAAPDQRLDPTLHNVDHDDQA) is disordered. Basic and acidic residues predominate over residues 349-364 (QRLDPTLHNVDHDDQA).

Belongs to the TRAFAC class OBG-HflX-like GTPase superfamily. OBG GTPase family. As to quaternary structure, monomer. Mg(2+) serves as cofactor.

The protein localises to the cytoplasm. Its function is as follows. An essential GTPase which binds GTP, GDP and possibly (p)ppGpp with moderate affinity, with high nucleotide exchange rates and a fairly low GTP hydrolysis rate. Plays a role in control of the cell cycle, stress response, ribosome biogenesis and in those bacteria that undergo differentiation, in morphogenesis control. This is GTPase Obg from Ralstonia pickettii (strain 12J).